The sequence spans 123 residues: Ragulator complex protein LAMTOR3-A (123 aa).

It belongs to the LAMTOR3 family. Part of the Ragulator complex composed of lamtor1, lamtor2, lamtor3, lamtor4 and lamtor5. The Ragulator complex interacts with slc38a9; the probable amino acid sensor. Component of the lysosomal folliculin complex (LFC).

Its subcellular location is the late endosome membrane. In terms of biological role, as part of the Ragulator complex it is involved in amino acid sensing and activation of mTORC1, a signaling complex promoting cell growth in response to growth factors, energy levels, and amino acids. Activated by amino acids through a mechanism involving the lysosomal V-ATPase, the Ragulator plays a dual role for the small GTPases Rag (RagA/RRAGA, RagB/RRAGB, RagC/RRAGC and/or RagD/RRAGD): it (1) acts as a guanine nucleotide exchange factor (GEF), activating the small GTPases Rag and (2) mediates recruitment of Rag GTPases to the lysosome membrane. Activated Ragulator and Rag GTPases function as a scaffold recruiting mTORC1 to lysosomes where it is in turn activated. In Xenopus laevis (African clawed frog), this protein is Ragulator complex protein LAMTOR3-A (lamtor3-a).